A 1487-amino-acid polypeptide reads, in one-letter code: Chromosome partition protein MukB (1487 aa).

34–41 (GGNGAGKS) contacts ATP. 5 coiled-coil regions span residues 297–426 (SSRE…LEKA), 460–666 (ALKH…RLAS), 781–806 (RAAREQRLELLRSEREEVVEKHAKAA), 836–1111 (EQAL…RTFV), and 1210–1266 (VEAI…LSNI). Residues 667–784 (PGGSNDPRLK…VIPLFGRAAR (118 aa)) form a flexible hinge region.

The protein belongs to the SMC family. MukB subfamily. As to quaternary structure, homodimerization via its hinge domain. Binds to DNA via its C-terminal region. Interacts, and probably forms a ternary complex, with MukE and MukF via its C-terminal region. The complex formation is stimulated by calcium or magnesium. Interacts with tubulin-related protein FtsZ.

The protein resides in the cytoplasm. It is found in the nucleoid. Functionally, plays a central role in chromosome condensation, segregation and cell cycle progression. Functions as a homodimer, which is essential for chromosome partition. Involved in negative DNA supercoiling in vivo, and by this means organize and compact chromosomes. May achieve or facilitate chromosome segregation by condensation DNA from both sides of a centrally located replisome during cell division. This chain is Chromosome partition protein MukB, found in Vibrio vulnificus (strain YJ016).